The sequence spans 533 residues: Yeast-form wall Protein 1 (533 aa).

Positions 1–21 (MKVSTIFAAASALFAATTTLA) are cleaved as a signal peptide. A glycan (N-linked (GlcNAc...) asparagine) is linked at N115. 2 disordered regions span residues 161-219 (YVPG…GEST) and 418-451 (PTKGGEQHQPGSPAGAATSAPGAPAPGASGAHAS). Low complexity-rich tracts occupy residues 163–214 (PGSS…ATGA) and 427–451 (PGSPAGAATSAPGAPAPGASGAHAS). Residue G511 is the site of GPI-anchor amidated glycine attachment. Positions 512 to 533 (AAAASAGASVLALALIPLAYFI) are cleaved as a propeptide — removed in mature form.

The protein belongs to the flocculin family. Post-translationally, the GPI-anchor is attached to the protein in the endoplasmic reticulum and serves to target the protein to the cell surface. There, the glucosamine-inositol phospholipid moiety is cleaved off and the GPI-modified mannoprotein is covalently attached via its lipidless GPI glycan remnant to the 1,6-beta-glucan of the outer cell wall layer. In terms of processing, cleaved by SAP9 and SAP10, which leads to its release from the cell wall. N-glycosylated.

It is found in the secreted. The protein resides in the cell wall. The protein localises to the membrane. Its function is as follows. Cell wall protein which plays an anti-adhesive role and promotes dispersal of yeast forms, which allows the organism to seek new sites for colonization. This Candida albicans (strain SC5314 / ATCC MYA-2876) (Yeast) protein is Yeast-form wall Protein 1 (YWP1).